Here is an 87-residue protein sequence, read N- to C-terminus: Small ribosomal subunit protein bS20 (87 aa).

A disordered region spans residues 1–26 (MANIKSAKKRAVQSEKARKHNASRRS).

This sequence belongs to the bacterial ribosomal protein bS20 family.

Functionally, binds directly to 16S ribosomal RNA. The polypeptide is Small ribosomal subunit protein bS20 (Salmonella gallinarum (strain 287/91 / NCTC 13346)).